The sequence spans 411 residues: Transforming growth factor beta regulator 1 (411 aa).

Disordered regions lie at residues 1-29 and 119-146; these read MSLL…PKKS and GPIS…KGKE. Ser2 is subject to N-acetylserine. Ser10 is modified (phosphoserine). Positions 182–241 constitute an FYR N-terminal domain; the sequence is VFPIGLGGLTVYSLGEIITDRPGFHDESAIYPVGYCSTRIYASMKCPDQKCLYTCQIKDG. The FYR C-terminal domain occupies 242 to 321; that stretch reads GVQPQFEIVP…RKCINYQWVK (80 aa).

It belongs to the TBRG1 family. Interacts with CDKN2A and MDM2. In terms of processing, ubiquitinated; mediated by MDM2 and leading to its subsequent proteasomal degradation. As to expression, widely expressed at low levels in most tissues, with highest levels in pancreas, lung and liver. Expression is decreased in primary tumors including lung, liver, breast, pancreas and kidney carcinomas, chronic lymphocytic leukemia and diffuse large B-cell lymphoma.

The protein resides in the nucleus. Acts as a growth inhibitor. Can activate p53/TP53, causes G1 arrest and collaborates with CDKN2A to restrict proliferation, but does not require either protein to inhibit DNA synthesis. Redistributes CDKN2A into the nucleoplasm. Involved in maintaining chromosomal stability. This Homo sapiens (Human) protein is Transforming growth factor beta regulator 1 (TBRG1).